Reading from the N-terminus, the 62-residue chain is Delta-theraphotoxin-Cg1a 3 (62 aa).

A signal peptide spans 1-21 (MKTSILFVIFSLALVFALSPA). A propeptide spanning residues 22–29 (TEIEETDR) is cleaved from the precursor. Cystine bridges form between C31-C46, C38-C51, and C45-C58.

The protein belongs to the neurotoxin 10 (Hwtx-1) family. 33 (Jztx-1) subfamily. As to expression, expressed by the venom gland.

It is found in the secreted. Moderately inhibits voltage-gated sodium channels and weakly inhibits voltage-gated potassium channel. Inhibits the inactivation of rat Nav1.2/SCN2A (IC(50)=870 nM), rat Nav1.3/SCN3A (IC(50)=845 nM), rat Nav1.4/SCN4A (IC(50)=339 nM), human Nav1.5/SCN5A (IC(50)=335 nM) and human Nav1.7/SCN9A sodium channels (IC(50)=348 nM). The toxin delays the inactivation of sodium channels without affecting the activation and steady-state inactivation kinetics in the physiological range of voltages. Site-directed mutagenesis of the sodium channel indicates that the toxin interacts with site 3 located at the extracellular S3-S4 linker of domain IV. On potassium channels, it inhibits activation of channels with an IC(50) of 8.05 uM through a voltage sensor-trapping mechanism. It increases muscle contraction in several assays (mouse phrenic nerve-diaphragm, toad heart, rat vas deferens) and is suggested to act both presynaptically and postsynaptically. This is Delta-theraphotoxin-Cg1a 3 from Chilobrachys guangxiensis (Chinese earth tiger tarantula).